A 189-amino-acid polypeptide reads, in one-letter code: Thermostable direct hemolysin 2 (189 aa).

A signal peptide spans 1–24 (MKYRYFAKKSFLFISMLAAFKTFA). An intrachain disulfide couples cysteine 175 to cysteine 185.

Belongs to the TDH hemolysin family. In terms of assembly, homodimer.

Bacterial hemolysins are exotoxins that attack blood cell membranes and cause cell rupture by mechanisms not clearly defined. The polypeptide is Thermostable direct hemolysin 2 (tdh2) (Vibrio parahaemolyticus serotype O3:K6 (strain RIMD 2210633)).